The following is a 97-amino-acid chain: MSSISRDEVAHLARLSRLSLTDDELDEFADQIDGIIEHVQKVSNVDTEGVEPMSHPSDLAGVMREDEVHPTLTAEQALDQAPASQRDRFEVPRILGE.

Positions 74–97 (AEQALDQAPASQRDRFEVPRILGE) are disordered. Positions 85 to 97 (QRDRFEVPRILGE) are enriched in basic and acidic residues.

It belongs to the GatC family. In terms of assembly, heterotrimer of A, B and C subunits.

The enzyme catalyses L-glutamyl-tRNA(Gln) + L-glutamine + ATP + H2O = L-glutaminyl-tRNA(Gln) + L-glutamate + ADP + phosphate + H(+). It carries out the reaction L-aspartyl-tRNA(Asn) + L-glutamine + ATP + H2O = L-asparaginyl-tRNA(Asn) + L-glutamate + ADP + phosphate + 2 H(+). Functionally, allows the formation of correctly charged Asn-tRNA(Asn) or Gln-tRNA(Gln) through the transamidation of misacylated Asp-tRNA(Asn) or Glu-tRNA(Gln) in organisms which lack either or both of asparaginyl-tRNA or glutaminyl-tRNA synthetases. The reaction takes place in the presence of glutamine and ATP through an activated phospho-Asp-tRNA(Asn) or phospho-Glu-tRNA(Gln). This chain is Aspartyl/glutamyl-tRNA(Asn/Gln) amidotransferase subunit C, found in Corynebacterium kroppenstedtii (strain DSM 44385 / JCM 11950 / CIP 105744 / CCUG 35717).